The sequence spans 133 residues: Small ribosomal subunit protein uS8 (133 aa).

This sequence belongs to the universal ribosomal protein uS8 family. As to quaternary structure, part of the 30S ribosomal subunit. Contacts proteins S5 and S12.

Its function is as follows. One of the primary rRNA binding proteins, it binds directly to 16S rRNA central domain where it helps coordinate assembly of the platform of the 30S subunit. This Trichodesmium erythraeum (strain IMS101) protein is Small ribosomal subunit protein uS8.